Reading from the N-terminus, the 286-residue chain is Sulfate transport system permease protein CysW (286 aa).

6 consecutive transmembrane segments (helical) span residues 20–40, 74–94, 108–128, 145–165, 207–227, and 255–275; these read LLPL…IIIP, LMGV…AFAI, VIDL…VLLY, IIFA…PFVA, LYGV…VSVV, and YTAA…KALL. An ABC transmembrane type-1 domain is found at 69-272; sequence IRLTLLMGVI…GISLVTLVLK (204 aa).

This sequence belongs to the binding-protein-dependent transport system permease family. CysTW subfamily. As to quaternary structure, the complex is composed of two ATP-binding proteins (CysA), two transmembrane proteins (CysT and CysW) and a solute-binding protein (CysP).

It is found in the cell inner membrane. Part of the ABC transporter complex CysAWTP (TC 3.A.1.6.1) involved in sulfate/thiosulfate import. Probably responsible for the translocation of the substrate across the membrane. The sequence is that of Sulfate transport system permease protein CysW (cysW) from Synechococcus elongatus (strain ATCC 33912 / PCC 7942 / FACHB-805) (Anacystis nidulans R2).